We begin with the raw amino-acid sequence, 624 residues long: Ceramide transfer protein (624 aa).

The span at 1–11 shows a compositional bias: polar residues; sequence MSDNQSWNSSG. Residues 1 to 24 are disordered; that stretch reads MSDNQSWNSSGSEEDPETESGPPV. The PH domain maps to 23 to 117; sequence PVERCGVLSK…WVDAIEQHKT (95 aa). 3 positions are modified to phosphoserine: S126, S132, and S135. The disordered stretch occupies residues 202 to 221; the sequence is DDEDDFPTTRSDGDFLHNTN. The stretch at 263-303 forms a coiled coil; the sequence is IELMVKREESWQKRHDREVEKRRRVEEAYKNVMEELKKKPR. A Phosphoserine modification is found at S315. An FFAT motif is present at residues 321–327; that stretch reads EFFDAVE. Y372 carries the phosphotyrosine modification. 3 positions are modified to phosphoserine: S373, S377, and S380. One can recognise an START domain in the interval 389–618; that stretch reads DVHRFSSQVE…FTSYVQEKTA (230 aa). Residues E472, Q493, N530, and Y579 each contribute to the an N-acylsphing-4-enine site.

As to quaternary structure, interacts with VAPA and VAPB. Interaction with VAPB is less efficient than with VAPA. Interacts (via FFAT motif) with MOSPD2 (via MSP domain). Post-translationally, phosphorylation on Ser-132 decreases the affinity toward phosphatidylinositol 4-phosphate at Golgi membranes and reduces ceramide transfer activity. Inactivated by hyperphosphorylation of serine residues by CSNK1G2/CK1 that triggers dissociation from the Golgi complex, thus down-regulating ER-to-Golgi transport of ceramide and sphingomyelin synthesis.

It localises to the cytoplasm. It is found in the golgi apparatus. Its subcellular location is the endoplasmic reticulum. The catalysed reaction is N-hexadecanoylsphing-4-enine(in) = N-hexadecanoylsphing-4-enine(out). Functionally, shelters ceramides and diacylglycerol lipids inside its START domain and mediates the intracellular trafficking of ceramides and diacylglycerol lipids in a non-vesicular manner. The sequence is that of Ceramide transfer protein (Cert1) from Mus musculus (Mouse).